The sequence spans 422 residues: Oxysterol-binding protein 7 (422 aa).

Positions 283–313 are disordered; the sequence is EAAPASSASKKEKKKEKKKAKHSKHTCSPSD. Residues 293-307 show a composition bias toward basic residues; sequence KEKKKEKKKAKHSKH. The stretch at 354–384 forms a coiled coil; that stretch reads MQAADQIKKEIEDEQRKRLQITKEEEKKERA. The segment at 402-422 is disordered; the sequence is TLAPVSNSTSSTASDAASGSN. Positions 407–422 are enriched in low complexity; it reads SNSTSSTASDAASGSN.

It belongs to the OSBP family.

The polypeptide is Oxysterol-binding protein 7 (osbG) (Dictyostelium discoideum (Social amoeba)).